A 97-amino-acid polypeptide reads, in one-letter code: Co-chaperonin GroES (97 aa).

It belongs to the GroES chaperonin family. As to quaternary structure, heptamer of 7 subunits arranged in a ring. Interacts with the chaperonin GroEL.

It localises to the cytoplasm. Together with the chaperonin GroEL, plays an essential role in assisting protein folding. The GroEL-GroES system forms a nano-cage that allows encapsulation of the non-native substrate proteins and provides a physical environment optimized to promote and accelerate protein folding. GroES binds to the apical surface of the GroEL ring, thereby capping the opening of the GroEL channel. This chain is Co-chaperonin GroES, found in Pseudomonas putida (strain W619).